The following is a 212-amino-acid chain: tRNA (guanine-N(7)-)-methyltransferase (212 aa).

S-adenosyl-L-methionine contacts are provided by glutamate 44, aspartate 69, aspartate 96, and aspartate 118. Residue aspartate 118 is part of the active site. Lysine 122 contacts substrate. An interaction with RNA region spans residues 124–129 (RHEKRR). Residues aspartate 154 and 191-194 (TEYE) contribute to the substrate site.

Belongs to the class I-like SAM-binding methyltransferase superfamily. TrmB family.

The catalysed reaction is guanosine(46) in tRNA + S-adenosyl-L-methionine = N(7)-methylguanosine(46) in tRNA + S-adenosyl-L-homocysteine. Its pathway is tRNA modification; N(7)-methylguanine-tRNA biosynthesis. Functionally, catalyzes the formation of N(7)-methylguanine at position 46 (m7G46) in tRNA. In Streptococcus suis (strain 05ZYH33), this protein is tRNA (guanine-N(7)-)-methyltransferase.